A 122-amino-acid chain; its full sequence is Ribonuclease P protein component (122 aa).

The protein belongs to the RnpA family. As to quaternary structure, consists of a catalytic RNA component (M1 or rnpB) and a protein subunit.

It carries out the reaction Endonucleolytic cleavage of RNA, removing 5'-extranucleotides from tRNA precursor.. Its function is as follows. RNaseP catalyzes the removal of the 5'-leader sequence from pre-tRNA to produce the mature 5'-terminus. It can also cleave other RNA substrates such as 4.5S RNA. The protein component plays an auxiliary but essential role in vivo by binding to the 5'-leader sequence and broadening the substrate specificity of the ribozyme. The chain is Ribonuclease P protein component from Lactobacillus gasseri (strain ATCC 33323 / DSM 20243 / BCRC 14619 / CIP 102991 / JCM 1131 / KCTC 3163 / NCIMB 11718 / NCTC 13722 / AM63).